A 427-amino-acid chain; its full sequence is 4-hydroxy-3-methylbut-2-en-1-yl diphosphate synthase (flavodoxin) (427 aa).

[4Fe-4S] cluster is bound by residues Cys300, Cys303, Cys346, and Glu353.

This sequence belongs to the IspG family. [4Fe-4S] cluster is required as a cofactor.

The catalysed reaction is (2E)-4-hydroxy-3-methylbut-2-enyl diphosphate + oxidized [flavodoxin] + H2O + 2 H(+) = 2-C-methyl-D-erythritol 2,4-cyclic diphosphate + reduced [flavodoxin]. It functions in the pathway isoprenoid biosynthesis; isopentenyl diphosphate biosynthesis via DXP pathway; isopentenyl diphosphate from 1-deoxy-D-xylulose 5-phosphate: step 5/6. Converts 2C-methyl-D-erythritol 2,4-cyclodiphosphate (ME-2,4cPP) into 1-hydroxy-2-methyl-2-(E)-butenyl 4-diphosphate. This chain is 4-hydroxy-3-methylbut-2-en-1-yl diphosphate synthase (flavodoxin), found in Chromobacterium violaceum (strain ATCC 12472 / DSM 30191 / JCM 1249 / CCUG 213 / NBRC 12614 / NCIMB 9131 / NCTC 9757 / MK).